A 124-amino-acid polypeptide reads, in one-letter code: Small ribosomal subunit protein uS12 (124 aa).

At Asp89 the chain carries 3-methylthioaspartic acid.

The protein belongs to the universal ribosomal protein uS12 family. In terms of assembly, part of the 30S ribosomal subunit. Contacts proteins S8 and S17. May interact with IF1 in the 30S initiation complex.

Its function is as follows. With S4 and S5 plays an important role in translational accuracy. Functionally, interacts with and stabilizes bases of the 16S rRNA that are involved in tRNA selection in the A site and with the mRNA backbone. Located at the interface of the 30S and 50S subunits, it traverses the body of the 30S subunit contacting proteins on the other side and probably holding the rRNA structure together. The combined cluster of proteins S8, S12 and S17 appears to hold together the shoulder and platform of the 30S subunit. This is Small ribosomal subunit protein uS12 from Vibrio cholerae serotype O1 (strain ATCC 39315 / El Tor Inaba N16961).